Here is a 265-residue protein sequence, read N- to C-terminus: Ribosomal RNA small subunit methyltransferase A (265 aa).

Positions 17, 19, 44, 65, 90, and 112 each coordinate S-adenosyl-L-methionine.

The protein belongs to the class I-like SAM-binding methyltransferase superfamily. rRNA adenine N(6)-methyltransferase family. RsmA subfamily.

Its subcellular location is the cytoplasm. It carries out the reaction adenosine(1518)/adenosine(1519) in 16S rRNA + 4 S-adenosyl-L-methionine = N(6)-dimethyladenosine(1518)/N(6)-dimethyladenosine(1519) in 16S rRNA + 4 S-adenosyl-L-homocysteine + 4 H(+). Its function is as follows. Specifically dimethylates two adjacent adenosines (A1518 and A1519) in the loop of a conserved hairpin near the 3'-end of 16S rRNA in the 30S particle. May play a critical role in biogenesis of 30S subunits. In Xylella fastidiosa (strain Temecula1 / ATCC 700964), this protein is Ribosomal RNA small subunit methyltransferase A.